Consider the following 536-residue polypeptide: Chaperonin GroEL 1 (536 aa).

ATP contacts are provided by residues 29–32 (TLGP), 86–90 (DGTTT), G413, 476–478 (NAA), and D492.

The protein belongs to the chaperonin (HSP60) family. Forms a cylinder of 14 subunits composed of two heptameric rings stacked back-to-back. Interacts with the co-chaperonin GroES.

It localises to the cytoplasm. It catalyses the reaction ATP + H2O + a folded polypeptide = ADP + phosphate + an unfolded polypeptide.. Together with its co-chaperonin GroES, plays an essential role in assisting protein folding. The GroEL-GroES system forms a nano-cage that allows encapsulation of the non-native substrate proteins and provides a physical environment optimized to promote and accelerate protein folding. In Nocardia farcinica (strain IFM 10152), this protein is Chaperonin GroEL 1.